Reading from the N-terminus, the 261-residue chain is Taurine import ATP-binding protein TauB (261 aa).

Positions 4–233 (LTADRVSVRY…RWRAGDSARA (230 aa)) constitute an ABC transporter domain. 38-45 (GPSGCGKT) serves as a coordination point for ATP.

This sequence belongs to the ABC transporter superfamily. Taurine importer (TC 3.A.1.17.1) family. As to quaternary structure, the complex is composed of two ATP-binding proteins (TauB), two transmembrane proteins (TauC) and a solute-binding protein (TauA).

The protein localises to the cell inner membrane. The enzyme catalyses taurine(out) + ATP + H2O = taurine(in) + ADP + phosphate + H(+). Functionally, part of the ABC transporter complex TauABC involved in taurine import. Responsible for energy coupling to the transport system. The chain is Taurine import ATP-binding protein TauB from Chromobacterium violaceum (strain ATCC 12472 / DSM 30191 / JCM 1249 / CCUG 213 / NBRC 12614 / NCIMB 9131 / NCTC 9757 / MK).